Reading from the N-terminus, the 710-residue chain is Amyloid beta precursor protein binding family B member 1 (710 aa).

Residues 1-15 (MSVPSSLSQSAINAN) are compositionally biased toward polar residues. 4 disordered regions span residues 1-24 (MSVPSSLSQSAINANSHGGPALSL), 131-254 (GLRG…TDSD), 276-299 (GTTQWEPPGRASPSQGSSPQEESQ), and 340-365 (TFPAQSLSPEPLPQEEEKLPPRNTNP). Acidic residues predominate over residues 145 to 173 (GPDEGEEKAAGEAEEEEEDDDDEEEEEDL). Lys-204 is modified (N6-acetyllysine). The segment covering 223 to 234 (SWATLSQGSPSY) has biased composition (polar residues). The region spanning 253 to 285 (SDLPAGWMRVQDTSGTYYWHIPTGTTQWEPPGR) is the WW domain. The span at 287 to 299 (SPSQGSSPQEESQ) shows a compositional bias: low complexity. Residues 370–509 (FAVRSLGWVE…SKIMAERRNA (140 aa)) enclose the PID 1 domain. Ser-459 carries the post-translational modification Phosphoserine; by PKC. Ser-517 is modified (phosphoserine). The PID 2 domain occupies 542–699 (KFQVYYLGNV…RRGVQSLWGS (158 aa)). Tyr-547 carries the post-translational modification Phosphotyrosine; by ABL1. Residue Ser-610 is modified to Phosphoserine; by SGK1. N6-acetyllysine is present on Lys-701.

Component of a complex, at least composed of APBB1, RASD1/DEXRAS1 and APP. Interacts (via PID domain 2) with APP (with the intracellular domain of the amyloid-beta precursor protein). Interacts (via PID domain 2) with RASD1/DEXRAS1; impairs the transcription activation activity. Interacts (via PID domain 1) with KAT5/TIP60. Interacts (via the WW domain) with the proline-rich region of APBB1IP. Interacts with TSHZ1 and TSHZ2. Interacts (via the WW domain) with histone H2AX (when phosphorylated on 'Tyr-142') and the proline-rich region of ENAH. Interacts with MAPK8. Interacts (via PID domain 1) with TSHZ3 (via homeobox domain). Interacts with SET. Found in a trimeric complex with HDAC1 and TSHZ3; the interaction between HDAC1 and APBB1 is mediated by TSHZ3. Interacts (via WWW domain) with NEK6. Interacts (via WWW domain) with ABL1. Interacts with RNF157. Interacts with ARF6. In terms of processing, phosphorylation at Ser-610 by SGK1 promotes its localization to the nucleus. Phosphorylated following nuclear translocation. Phosphorylation at Tyr-547 by ABL1 enhances transcriptional activation activity and reduces the affinity for RASD1/DEXRAS1. Phosphorylated at Ser-459 by PKC upon insulin activation. Acetylation at Lys-204 and Lys-701 by KAT5 promotes its transcription activator activity. Post-translationally, polyubiquitination by RNF157 leads to degradation by the proteasome. In terms of tissue distribution, highly expressed in brain; strongly reduced in post-mortem elderly subjects with Alzheimer disease. As to expression, expressed preferentially in the brain.

The protein resides in the cell membrane. Its subcellular location is the cytoplasm. The protein localises to the nucleus. It is found in the cell projection. It localises to the growth cone. The protein resides in the nucleus speckle. Transcription coregulator that can have both coactivator and corepressor functions. Adapter protein that forms a transcriptionally active complex with the gamma-secretase-derived amyloid precursor protein (APP) intracellular domain. Plays a central role in the response to DNA damage by translocating to the nucleus and inducing apoptosis. May act by specifically recognizing and binding histone H2AX phosphorylated on 'Tyr-142' (H2AXY142ph) at double-strand breaks (DSBs), recruiting other pro-apoptosis factors such as MAPK8/JNK1. Required for histone H4 acetylation at double-strand breaks (DSBs). Its ability to specifically bind modified histones and chromatin modifying enzymes such as KAT5/TIP60, probably explains its transcription activation activity. Functions in association with TSHZ3, SET and HDAC factors as a transcriptional repressor, that inhibits the expression of CASP4. Associates with chromatin in a region surrounding the CASP4 transcriptional start site(s). Involved in hippocampal neurite branching and neuromuscular junction formation, as a result plays a role in spatial memory functioning. Plays a role in the maintenance of lens transparency. May play a role in muscle cell strength. Acts as a molecular adapter that functions in neurite outgrowth by activating the RAC1-ARF6 axis upon insulin treatment. This is Amyloid beta precursor protein binding family B member 1 from Homo sapiens (Human).